Here is a 25-residue protein sequence, read N- to C-terminus: Small ribosomal subunit protein eS32 (25 aa).

The tract at residues 1-25 is disordered; it reads MRAKWRKKRVRRLKRKRRKTRARSK.

Belongs to the eukaryotic ribosomal protein eS32 family. Component of the small ribosomal subunit.

This chain is Small ribosomal subunit protein eS32 (RPL41), found in Quercus suber (Cork oak).